The primary structure comprises 65 residues: Small ribosomal subunit protein bS21 (65 aa).

Belongs to the bacterial ribosomal protein bS21 family.

This is Small ribosomal subunit protein bS21 from Thermodesulfovibrio yellowstonii (strain ATCC 51303 / DSM 11347 / YP87).